The following is a 268-amino-acid chain: Uronate dehydrogenase (268 aa).

NAD(+) is bound by residues 17–18 (GL), 37–39 (DIS), 55–56 (DL), and 75–79 (FGGVS). Residues Ser-79 and 115–117 (SNH) contribute to the substrate site. Tyr-140 (proton acceptor) is an active-site residue. Lys-144 serves as a coordination point for NAD(+). Ser-169 is a binding site for substrate. Ser-170 provides a ligand contact to NAD(+). Arg-178 serves as a coordination point for substrate.

This sequence belongs to the NAD(P)-dependent epimerase/dehydratase family. Homohexamer.

The catalysed reaction is beta-D-galacturonate + NAD(+) = D-galactaro-1,5-lactone + NADH + H(+). The enzyme catalyses beta-D-glucuronate + NAD(+) = D-glucaro-1,5-lactone + NADH + H(+). The protein operates within carbohydrate acid metabolism; D-galacturonate degradation via prokaryotic oxidative pathway. Catalyzes the oxidation of beta-D-galacturonate and beta-D-glucuronate to galactarate and D-glucarate, respectively. The sequence is that of Uronate dehydrogenase (udh) from Pseudomonas putida (strain ATCC 47054 / DSM 6125 / CFBP 8728 / NCIMB 11950 / KT2440).